The following is a 200-amino-acid chain: MTRISHITRNTKETQIELSINLDGTGQADISTGIGFLDHMLTLLTFHSDFDLKIIGHGDHETVGMDPHHLIEDVAIALGKCISEALGNKLGIRRYGSFTIPMDEALVTCDLDISGRPYLVFHADLSGNQKLGGYDTEMTEEFFRALAFNAGITLHLNEHYGQNTHHIIEGMFKSTARALKQAVSIDESKVGEIPSSKGVL.

Substrate contacts are provided by residues E13, 39–47, 68–72, R94, and R116; these read HMLTLLTFH and HHLIE. H39, H68, H69, and E72 together coordinate Mn(2+). E141, H165, H166, and E169 together coordinate Mn(2+). Residues 165-173 and 195-197 contribute to the substrate site; these read HHIIEGMFK and SSK.

Belongs to the imidazoleglycerol-phosphate dehydratase family. It depends on Mn(2+) as a cofactor.

Its subcellular location is the cytoplasm. The enzyme catalyses D-erythro-1-(imidazol-4-yl)glycerol 3-phosphate = 3-(imidazol-4-yl)-2-oxopropyl phosphate + H2O. The protein operates within amino-acid biosynthesis; L-histidine biosynthesis; L-histidine from 5-phospho-alpha-D-ribose 1-diphosphate: step 6/9. The protein is Imidazoleglycerol-phosphate dehydratase (hisB) of Lactococcus lactis subsp. lactis (strain IL1403) (Streptococcus lactis).